Reading from the N-terminus, the 263-residue chain is Small ribosomal subunit protein uS2 (263 aa).

The segment covering 223–249 (KALREQDGEALANEEKEITDEEKKEVL) has biased composition (basic and acidic residues). The disordered stretch occupies residues 223-263 (KALREQDGEALANEEKEITDEEKKEVLDEAMSEEDFGEEQE). Over residues 250–263 (DEAMSEEDFGEEQE) the composition is skewed to acidic residues.

It belongs to the universal ribosomal protein uS2 family.

This is Small ribosomal subunit protein uS2 from Campylobacter jejuni subsp. jejuni serotype O:6 (strain 81116 / NCTC 11828).